A 366-amino-acid polypeptide reads, in one-letter code: Cobalt-precorrin-5B C(1)-methyltransferase (366 aa).

The protein belongs to the CbiD family.

The catalysed reaction is Co-precorrin-5B + S-adenosyl-L-methionine = Co-precorrin-6A + S-adenosyl-L-homocysteine. Its pathway is cofactor biosynthesis; adenosylcobalamin biosynthesis; cob(II)yrinate a,c-diamide from sirohydrochlorin (anaerobic route): step 6/10. Catalyzes the methylation of C-1 in cobalt-precorrin-5B to form cobalt-precorrin-6A. The chain is Cobalt-precorrin-5B C(1)-methyltransferase from Thermus thermophilus (strain ATCC BAA-163 / DSM 7039 / HB27).